Here is a 244-residue protein sequence, read N- to C-terminus: tRNA (guanine-N(7)-)-methyltransferase (244 aa).

The tract at residues 1-20 (MTNPFDSAGSKAPPKPFTVS) is disordered. S-adenosyl-L-methionine-binding residues include Glu75, Glu100, Asp127, and Asp150. The active site involves Asp150. Lys154 contributes to the substrate binding site. An interaction with RNA region spans residues 156 to 161 (RHNKRR). Substrate-binding positions include Asp186 and 223–226 (THFE).

It belongs to the class I-like SAM-binding methyltransferase superfamily. TrmB family.

It carries out the reaction guanosine(46) in tRNA + S-adenosyl-L-methionine = N(7)-methylguanosine(46) in tRNA + S-adenosyl-L-homocysteine. The protein operates within tRNA modification; N(7)-methylguanine-tRNA biosynthesis. Catalyzes the formation of N(7)-methylguanine at position 46 (m7G46) in tRNA. This Stenotrophomonas maltophilia (strain K279a) protein is tRNA (guanine-N(7)-)-methyltransferase.